Here is a 298-residue protein sequence, read N- to C-terminus: 5'-AMP-activated protein kinase subunit beta (298 aa).

Residues 1–98 (MGNVQSQEGE…KTHQPYSGPC (98 aa)) are disordered. A compositionally biased stretch (polar residues) spans 19 to 30 (QDATTTPDNANN). The segment covering 48–59 (LNQEGEMSDDNQ) has biased composition (acidic residues). Residues 60 to 77 (QEGGNNRTSQNGTSGSSG) are compositionally biased toward polar residues. Residues 78 to 91 (HTKRRSQTSGKKTH) show a composition bias toward basic residues. 250–252 (DQS) provides a ligand contact to ADP.

This sequence belongs to the 5'-AMP-activated protein kinase beta subunit family. AMPK is a heterotrimer of an alpha catalytic subunit (ssp2), a beta (amk2) and a gamma non-catalytic subunits (cbs2). The beta subunit serves as a bridge between the catalytic and the regulatory subunit.

The protein resides in the cytoplasm. Its function is as follows. Beta subunit of AMP-activated protein kinase (AMPK), which is required for transcriptional, metabolic, and developmental adaptations in response to glucose limitation. Has a structural role, mediating heterotrimer formation, and a regulatory role, defining carbon source-regulated subcellular location and substrate specificity of the AMPK kinase complex. In Schizosaccharomyces pombe (strain 972 / ATCC 24843) (Fission yeast), this protein is 5'-AMP-activated protein kinase subunit beta (amk2).